Consider the following 147-residue polypeptide: Deoxyuridine 5'-triphosphate nucleotidohydrolase (147 aa).

Substrate contacts are provided by residues 67-69 (RSG), Asn80, and 84-86 (TID).

Belongs to the dUTPase family. The cofactor is Mg(2+).

The enzyme catalyses dUTP + H2O = dUMP + diphosphate + H(+). It participates in pyrimidine metabolism; dUMP biosynthesis; dUMP from dCTP (dUTP route): step 2/2. This enzyme is involved in nucleotide metabolism: it produces dUMP, the immediate precursor of thymidine nucleotides and it decreases the intracellular concentration of dUTP so that uracil cannot be incorporated into DNA. The chain is Deoxyuridine 5'-triphosphate nucleotidohydrolase from Syntrophotalea carbinolica (strain DSM 2380 / NBRC 103641 / GraBd1) (Pelobacter carbinolicus).